A 319-amino-acid chain; its full sequence is Phosphatidylglycerol--prolipoprotein diacylglyceryl transferase (319 aa).

The next 3 helical transmembrane spans lie at proline 21–leucine 41, glycine 50–glycine 70, and asparagine 98–phenylalanine 118. Residue arginine 144 coordinates a 1,2-diacyl-sn-glycero-3-phospho-(1'-sn-glycerol). 2 helical membrane-spanning segments follow: residues valine 191 to tryptophan 211 and isoleucine 254 to lysine 274. Positions alanine 295–arginine 319 are disordered.

Belongs to the Lgt family.

Its subcellular location is the cell membrane. The enzyme catalyses L-cysteinyl-[prolipoprotein] + a 1,2-diacyl-sn-glycero-3-phospho-(1'-sn-glycerol) = an S-1,2-diacyl-sn-glyceryl-L-cysteinyl-[prolipoprotein] + sn-glycerol 1-phosphate + H(+). Its pathway is protein modification; lipoprotein biosynthesis (diacylglyceryl transfer). In terms of biological role, catalyzes the transfer of the diacylglyceryl group from phosphatidylglycerol to the sulfhydryl group of the N-terminal cysteine of a prolipoprotein, the first step in the formation of mature lipoproteins. This chain is Phosphatidylglycerol--prolipoprotein diacylglyceryl transferase, found in Corynebacterium glutamicum (strain R).